A 242-amino-acid polypeptide reads, in one-letter code: Ribosomal RNA small subunit methyltransferase G (242 aa).

S-adenosyl-L-methionine contacts are provided by residues Gly-78, Leu-83, 130-131, and Arg-151; that span reads AE.

Belongs to the methyltransferase superfamily. RNA methyltransferase RsmG family.

The protein resides in the cytoplasm. Functionally, specifically methylates the N7 position of guanine in position 518 of 16S rRNA. This Salinispora tropica (strain ATCC BAA-916 / DSM 44818 / JCM 13857 / NBRC 105044 / CNB-440) protein is Ribosomal RNA small subunit methyltransferase G.